The primary structure comprises 98 residues: UPF0251 protein Sputw3181_3483 (98 aa).

Belongs to the UPF0251 family.

The sequence is that of UPF0251 protein Sputw3181_3483 from Shewanella sp. (strain W3-18-1).